The following is a 511-amino-acid chain: 4,4'-diapophytoene desaturase (4,4'-diapolycopene-forming) (511 aa).

It belongs to the carotenoid/retinoid oxidoreductase family.

The enzyme catalyses 15-cis-4,4'-diapophytoene + 4 FAD + 4 H(+) = all-trans-4,4'-diapolycopene + 4 FADH2. It functions in the pathway carotenoid biosynthesis. In terms of biological role, involved in the biosynthesis of C30 carotenoids. Catalyzes four successive dehydrogenation reactions that lead to the introduction of four double bonds into 4,4'-diapophytoene (dehydrosqualene) to yield 4,4'-diapolycopene. The protein is 4,4'-diapophytoene desaturase (4,4'-diapolycopene-forming) of Methylomonas sp.